The chain runs to 427 residues: Kynureninase (427 aa).

Residues Thr-104, Thr-105, 132-135, Asp-213, His-216, and Tyr-238 contribute to the pyridoxal 5'-phosphate site; that span reads FPSD. Lys-239 is subject to N6-(pyridoxal phosphate)lysine. Pyridoxal 5'-phosphate contacts are provided by Trp-267 and Thr-295.

The protein belongs to the kynureninase family. In terms of assembly, homodimer. It depends on pyridoxal 5'-phosphate as a cofactor.

It catalyses the reaction L-kynurenine + H2O = anthranilate + L-alanine + H(+). The enzyme catalyses 3-hydroxy-L-kynurenine + H2O = 3-hydroxyanthranilate + L-alanine + H(+). It participates in amino-acid degradation; L-kynurenine degradation; L-alanine and anthranilate from L-kynurenine: step 1/1. Its pathway is cofactor biosynthesis; NAD(+) biosynthesis; quinolinate from L-kynurenine: step 2/3. In terms of biological role, catalyzes the cleavage of L-kynurenine (L-Kyn) and L-3-hydroxykynurenine (L-3OHKyn) into anthranilic acid (AA) and 3-hydroxyanthranilic acid (3-OHAA), respectively. The protein is Kynureninase of Shouchella clausii (strain KSM-K16) (Alkalihalobacillus clausii).